The chain runs to 101 residues: ATP-dependent Clp protease adapter protein ClpS 2 (101 aa).

The protein belongs to the ClpS family. Binds to the N-terminal domain of the chaperone ClpA.

Involved in the modulation of the specificity of the ClpAP-mediated ATP-dependent protein degradation. This chain is ATP-dependent Clp protease adapter protein ClpS 2, found in Rhizobium meliloti (strain 1021) (Ensifer meliloti).